Consider the following 413-residue polypeptide: MAGLAPEGSQFDARQYDAKMTELLGTEQEEFFTSYDEVYDSFDAMGLQENLLRGIYAYGFEKPSAIQQRGIVPFCKGLDVIQQAQSGTGKTATFCSGVLQQLDYSLVECQALVLAPTRELAQQIEKVMRALGDYLGVKVHACVGGTSVREDQRILQSGVHVVVGTPGRVFDMLRRQSLRPDHIKMFVLDEADEMLSRGFKDQIYDIFQLLPPKIQVGVFSATMPPEALEITRKFMSKPVRILVKRDDVTLEGIKQFYVNVDKEEWKLETLCDLYETLAITQSVIFVNTRRKVDWLTDKMRSRDHTVSATHGDMDQNTRDIIMREFRSGSSRVLITTDLLARGIDVQQVSLVINYDLPTQPENYLHRIGRSGRFGRKGVAINFVTKDDERMLFDIQKFYNVVIEELPANVADLL.

The Q motif signature appears at Asp-40–Gln-68. A Helicase ATP-binding domain is found at Ile-71–Ile-241. ATP is bound at residue Ala-84–Thr-91. A DEAD box motif is present at residues Asp-189–Asp-192. The region spanning Gly-252–Leu-413 is the Helicase C-terminal domain.

Belongs to the DEAD box helicase family. eIF4A subfamily. In terms of assembly, eIF4F is a multi-subunit complex, the composition of which varies with external and internal environmental conditions. It is composed of at least EIF4A, EIF4E and EIF4G.

It catalyses the reaction ATP + H2O = ADP + phosphate + H(+). Its function is as follows. ATP-dependent RNA helicase which is a subunit of the eIF4F complex involved in cap recognition and is required for mRNA binding to ribosome. In the current model of translation initiation, eIF4A unwinds RNA secondary structures in the 5'-UTR of mRNAs which is necessary to allow efficient binding of the small ribosomal subunit, and subsequent scanning for the initiator codon. The polypeptide is Eukaryotic initiation factor 4A-14 (Nicotiana tabacum (Common tobacco)).